The following is a 266-amino-acid chain: Glucosamine-6-phosphate deaminase (266 aa).

Catalysis depends on Asp72, which acts as the Proton acceptor; for enolization step. Residue Asp141 is the For ring-opening step of the active site. His143 functions as the Proton acceptor; for ring-opening step in the catalytic mechanism. Glu148 functions as the For ring-opening step in the catalytic mechanism.

This sequence belongs to the glucosamine/galactosamine-6-phosphate isomerase family. NagB subfamily. As to quaternary structure, homohexamer.

The catalysed reaction is alpha-D-glucosamine 6-phosphate + H2O = beta-D-fructose 6-phosphate + NH4(+). It functions in the pathway amino-sugar metabolism; N-acetylneuraminate degradation; D-fructose 6-phosphate from N-acetylneuraminate: step 5/5. Its activity is regulated as follows. Allosterically activated by N-acetylglucosamine 6-phosphate (GlcNAc6P). Catalyzes the reversible isomerization-deamination of glucosamine 6-phosphate (GlcN6P) to form fructose 6-phosphate (Fru6P) and ammonium ion. The protein is Glucosamine-6-phosphate deaminase of Tolumonas auensis (strain DSM 9187 / NBRC 110442 / TA 4).